A 577-amino-acid polypeptide reads, in one-letter code: Proline--tRNA ligase (577 aa).

It belongs to the class-II aminoacyl-tRNA synthetase family. ProS type 1 subfamily. As to quaternary structure, homodimer.

The protein resides in the cytoplasm. The catalysed reaction is tRNA(Pro) + L-proline + ATP = L-prolyl-tRNA(Pro) + AMP + diphosphate. Catalyzes the attachment of proline to tRNA(Pro) in a two-step reaction: proline is first activated by ATP to form Pro-AMP and then transferred to the acceptor end of tRNA(Pro). As ProRS can inadvertently accommodate and process non-cognate amino acids such as alanine and cysteine, to avoid such errors it has two additional distinct editing activities against alanine. One activity is designated as 'pretransfer' editing and involves the tRNA(Pro)-independent hydrolysis of activated Ala-AMP. The other activity is designated 'posttransfer' editing and involves deacylation of mischarged Ala-tRNA(Pro). The misacylated Cys-tRNA(Pro) is not edited by ProRS. In Janthinobacterium sp. (strain Marseille) (Minibacterium massiliensis), this protein is Proline--tRNA ligase.